The sequence spans 1045 residues: E3 ubiquitin-protein ligase Topors (1045 aa).

Positions 1–35 (MGSQPPLGSPLSREEGEAPPPAPASEGRRRSRRVR) are disordered. An E3 ubiquitin-protein ligase activity region spans residues 1 to 195 (MGSQPPLGSP…RERNASVYSP (195 aa)). The segment at 51–374 (ELAASAPARP…MAAFDQHANY (324 aa)) is required for DNA-binding. Residues Lys73, Lys76, Lys83, and Lys88 each participate in a glycyl lysine isopeptide (Lys-Gly) (interchain with G-Cter in SUMO2) cross-link. Phosphoserine is present on Ser98. The segment at 103-142 (CPICLDRFDNVSYLDRCLHKFCFRCVQEWSKNKAECPLCK) adopts an RING-type zinc-finger fold. A Glycyl lysine isopeptide (Lys-Gly) (interchain with G-Cter in SUMO2) cross-link involves residue Lys159. Ser194 bears the Phosphoserine mark. Lys249 participates in a covalent cross-link: Glycyl lysine isopeptide (Lys-Gly) (interchain with G-Cter in SUMO2). Positions 437-574 (SLLNTSDSSD…STSLSSPRNL (138 aa)) are required for sumoylation and localization to discrete nuclear foci. The interaction with SUMO1 stretch occupies residues 437–654 (SLLNTSDSSD…RSRTRDSSWS (218 aa)). A disordered region spans residues 442–475 (SDSSDEELVTGGATSQIQGVQTNDDLNNDSDDSS). Positions 453–463 (GATSQIQGVQT) are enriched in polar residues. The segment at 456-731 (SQIQGVQTND…RRTLSRAHYS (276 aa)) is interaction with p53/TP53. The segment at 456-882 (SQIQGVQTND…GKATDTTKHH (427 aa)) is interaction with TOP1. Ser499 bears the Phosphoserine mark. The disordered stretch occupies residues 511–692 (ETVKTQEQEQ…RSRNRDRYYL (182 aa)). A compositionally biased stretch (low complexity) spans 521–534 (SYSSGDSDVSRCSS). Basic and acidic residues predominate over residues 539-565 (LGKDEQINKGHCDSSTRIKSKKEEKRS). Residue Lys560 forms a Glycyl lysine isopeptide (Lys-Gly) (interchain with G-Cter in SUMO) linkage. Positions 566–578 (TSLSSPRNLNSSV) are enriched in polar residues. Phosphoserine is present on Ser585. Basic residues-rich tracts occupy residues 588-597 (NHRHRKRGRS), 613-630 (KNHRKHHGKKRMKSKRSR), and 637-647 (PRGRRDKKRSR). Over residues 654–669 (SRRSQTLSLSSESTSR) the composition is skewed to low complexity. Lys701 participates in a covalent cross-link: Glycyl lysine isopeptide (Lys-Gly) (interchain with G-Cter in SUMO2). Residues 713 to 936 (RDGYESSYRR…DNSGPQDPLQ (224 aa)) form a disordered region. Ser718 is subject to Phosphoserine; by PLK1. Residues 721 to 730 (RRRTLSRAHY) show a composition bias toward basic residues. Polar residues predominate over residues 731–747 (SRQSSSPEFRVQSFSER). Residue Ser734 is modified to Phosphoserine. Composition is skewed to basic and acidic residues over residues 755–766 (NHSERKYYYYER) and 816–825 (FASKAKDSHY). Glycyl lysine isopeptide (Lys-Gly) (interchain with G-Cter in SUMO2) cross-links involve residues Lys819 and Lys837. Residues 854–863 (KHKRRKRKTR) show a composition bias toward basic residues. Positions 854–917 (KHKRRKRKTR…ITIDSDSDKD (64 aa)) are interaction with UBE2I. A phosphoserine mark is found at Ser864 and Ser866. Residues 880 to 897 (KHHKKKKKKHKKKHKKHH) show a composition bias toward basic residues. Phosphoserine occurs at positions 912, 914, and 1028. Positions 913 to 923 (DSDKDSEVKED) are enriched in basic and acidic residues.

As to quaternary structure, interacts with PARK7/DJ-1. Interacts with TOP1. Interacts with p53/TP53; can both ubiquitinate and sumoylate p53/TP53. Interacts with the SUMO1 conjugating enzyme UBE2I. Interacts with SUMO1. Interacts with NKX3-1; polyubiquitinates NKX3-1 and induces its proteasomal degradation. Interacts with SIN3A; sumoylates SIN3A. Interacts with IKBKE; induced by DNA damage. In terms of processing, phosphorylation at Ser-98 regulates the E3 ubiquitin-protein ligase activity but not the SUMO1-protein ligase activity. Phosphorylation at Ser-718 increases the E3 ubiquitin-protein ligase activity versus the SUMO1-protein ligase activity resulting in increased p53/TP53 ubiquitination and degradation. Sumoylated. As to expression, expressed at highest levels in testis and at lower levels in adrenal gland, bone marrow, brain, colon, heart, kidney, liver, muscle, ovary, pancreas, placenta, prostate, skeletal muscle, skin, small intestine, spleen, stomach, testis, thymus, thyroid and uterus. Expressed in the alveolar epithelium of the lung. Expression is commonly decreased in colon adenocarcinomas and lung cancers.

It is found in the nucleus. The protein localises to the PML body. It catalyses the reaction S-ubiquitinyl-[E2 ubiquitin-conjugating enzyme]-L-cysteine + [acceptor protein]-L-lysine = [E2 ubiquitin-conjugating enzyme]-L-cysteine + N(6)-ubiquitinyl-[acceptor protein]-L-lysine.. Functions as an E3 ubiquitin-protein ligase and as an E3 SUMO1-protein ligase. Probable tumor suppressor involved in cell growth, cell proliferation and apoptosis that regulates p53/TP53 stability through ubiquitin-dependent degradation. May regulate chromatin modification through sumoylation of several chromatin modification-associated proteins. May be involved in DNA damage-induced cell death through IKBKE sumoylation. The polypeptide is E3 ubiquitin-protein ligase Topors (TOPORS) (Homo sapiens (Human)).